The chain runs to 124 residues: Cytochrome c oxidase subunit 4 isoform 1, mitochondrial (124 aa).

The residue at position 4 (Lys4) is an N6-acetyllysine; alternate. Position 4 is an N6-succinyllysine; alternate (Lys4). Phosphoserine is present on residues Ser31 and Ser33. An N6-acetyllysine; alternate modification is found at Lys35. Position 35 is an N6-succinyllysine; alternate (Lys35). At Lys42 the chain carries N6-acetyllysine.

This sequence belongs to the cytochrome c oxidase IV family. As to quaternary structure, component of the cytochrome c oxidase (complex IV, CIV), a multisubunit enzyme composed of 14 subunits. The complex is composed of a catalytic core of 3 subunits MT-CO1, MT-CO2 and MT-CO3, encoded in the mitochondrial DNA, and 11 supernumerary subunits COX4I, COX5A, COX5B, COX6A, COX6B, COX6C, COX7A, COX7B, COX7C, COX8 and NDUFA4, which are encoded in the nuclear genome. The complex exists as a monomer or a dimer and forms supercomplexes (SCs) in the inner mitochondrial membrane with NADH-ubiquinone oxidoreductase (complex I, CI) and ubiquinol-cytochrome c oxidoreductase (cytochrome b-c1 complex, complex III, CIII), resulting in different assemblies (supercomplex SCI(1)III(2)IV(1) and megacomplex MCI(2)III(2)IV(2)). Interacts with PHB2; the interaction decreases in absence of SPHK2. Interacts with AFG1L. Interacts with ABCB7; this interaction allows the regulation of cellular iron homeostasis and cellular reactive oxygen species (ROS) levels in cardiomyocytes. Interacts with FLVCR2; this interaction occurs in the absence of heme and is disrupted upon heme binding. Interacts with IRGC.

The protein resides in the mitochondrion inner membrane. The protein operates within energy metabolism; oxidative phosphorylation. Component of the cytochrome c oxidase, the last enzyme in the mitochondrial electron transport chain which drives oxidative phosphorylation. The respiratory chain contains 3 multisubunit complexes succinate dehydrogenase (complex II, CII), ubiquinol-cytochrome c oxidoreductase (cytochrome b-c1 complex, complex III, CIII) and cytochrome c oxidase (complex IV, CIV), that cooperate to transfer electrons derived from NADH and succinate to molecular oxygen, creating an electrochemical gradient over the inner membrane that drives transmembrane transport and the ATP synthase. Cytochrome c oxidase is the component of the respiratory chain that catalyzes the reduction of oxygen to water. Electrons originating from reduced cytochrome c in the intermembrane space (IMS) are transferred via the dinuclear copper A center (CU(A)) of subunit 2 and heme A of subunit 1 to the active site in subunit 1, a binuclear center (BNC) formed by heme A3 and copper B (CU(B)). The BNC reduces molecular oxygen to 2 water molecules using 4 electrons from cytochrome c in the IMS and 4 protons from the mitochondrial matrix. The polypeptide is Cytochrome c oxidase subunit 4 isoform 1, mitochondrial (COX4I1) (Saimiri sciureus (Common squirrel monkey)).